A 330-amino-acid polypeptide reads, in one-letter code: Interleukin-12 subunit beta (330 aa).

The N-terminal stretch at 1–22 (MHPQQLVVSWFSLVLLASPIMA) is a signal peptide. Residues 23-106 (IWELEKNVYV…LSHSLLLLHK (84 aa)) form the Ig-like C2-type domain. Cysteine 50 and cysteine 90 are oxidised to a cystine. 2 N-linked (GlcNAc...) asparagine glycosylation sites follow: asparagine 136 and asparagine 224. Residues 239 to 330 (PPKNLQLKPL…WSEWASVSCS (92 aa)) form the Fibronectin type-III domain.

It belongs to the IL-12B family. Heterodimer with IL12A; disulfide-linked. The heterodimer is known as interleukin IL-12. Heterodimer with IL23A; disulfide-linked. The heterodimer is known as interleukin IL-23. Also secreted as a monomer. Interacts with NBR1; this interaction promotes IL-12 secretion.

It is found in the secreted. Cytokine that can act as a growth factor for activated T and NK cells, enhance the lytic activity of NK/lymphokine-activated killer cells, and stimulate the production of IFN-gamma by resting PBMC. Its function is as follows. Associates with IL23A to form the IL-23 interleukin, a heterodimeric cytokine which functions in innate and adaptive immunity. IL-23 may constitute with IL-17 an acute response to infection in peripheral tissues. IL-23 binds to a heterodimeric receptor complex composed of IL12RB1 and IL23R, activates the Jak-Stat signaling cascade, stimulates memory rather than naive T-cells and promotes production of pro-inflammatory cytokines. IL-23 induces autoimmune inflammation and thus may be responsible for autoimmune inflammatory diseases and may be important for tumorigenesis. The sequence is that of Interleukin-12 subunit beta (IL12B) from Lama glama (Llama).